The following is a 343-amino-acid chain: GTPase Obg (343 aa).

The Obg domain occupies 1–159 (MKFLDQAKVY…LNIWLRLKLI (159 aa)). The 168-residue stretch at 160 to 327 (ADAGLVGLPN…VLRALMTVIA (168 aa)) folds into the OBG-type G domain. GTP is bound by residues 166-173 (GLPNAGKS), 191-195 (FTTLH), 212-215 (DIPG), 279-282 (SQVD), and 308-310 (SAV). Mg(2+)-binding residues include S173 and T193.

This sequence belongs to the TRAFAC class OBG-HflX-like GTPase superfamily. OBG GTPase family. Monomer. It depends on Mg(2+) as a cofactor.

It localises to the cytoplasm. In terms of biological role, an essential GTPase which binds GTP, GDP and possibly (p)ppGpp with moderate affinity, with high nucleotide exchange rates and a fairly low GTP hydrolysis rate. Plays a role in control of the cell cycle, stress response, ribosome biogenesis and in those bacteria that undergo differentiation, in morphogenesis control. This chain is GTPase Obg, found in Mesorhizobium japonicum (strain LMG 29417 / CECT 9101 / MAFF 303099) (Mesorhizobium loti (strain MAFF 303099)).